Consider the following 263-residue polypeptide: 3-methyl-2-oxobutanoate hydroxymethyltransferase (263 aa).

Asp-43 and Asp-82 together coordinate Mg(2+). 3-methyl-2-oxobutanoate is bound by residues 43-44 (DS), Asp-82, and Lys-111. Glu-113 lines the Mg(2+) pocket. Glu-179 (proton acceptor) is an active-site residue.

This sequence belongs to the PanB family. Homodecamer; pentamer of dimers. Mg(2+) is required as a cofactor.

The protein localises to the cytoplasm. The enzyme catalyses 3-methyl-2-oxobutanoate + (6R)-5,10-methylene-5,6,7,8-tetrahydrofolate + H2O = 2-dehydropantoate + (6S)-5,6,7,8-tetrahydrofolate. Its pathway is cofactor biosynthesis; (R)-pantothenate biosynthesis; (R)-pantoate from 3-methyl-2-oxobutanoate: step 1/2. In terms of biological role, catalyzes the reversible reaction in which hydroxymethyl group from 5,10-methylenetetrahydrofolate is transferred onto alpha-ketoisovalerate to form ketopantoate. This Neisseria meningitidis serogroup A / serotype 4A (strain DSM 15465 / Z2491) protein is 3-methyl-2-oxobutanoate hydroxymethyltransferase.